A 1345-amino-acid polypeptide reads, in one-letter code: Protein dispatched homolog 2 (1345 aa).

The tract at residues 1 to 28 (MAPEASPERSCSLHTCPLEDPTGAPVPP) is disordered. Residues 125–145 (VAVIVGCLAFIFLCTLAGLLG) form a helical membrane-spanning segment. N-linked (GlcNAc...) asparagine glycosylation is found at N304 and N420. The region spanning 429-598 (LGLKPRLLKY…LLWLPATVVL (170 aa)) is the SSD domain. 6 helical membrane passes run 440–460 (LAED…GMSL), 465–485 (LFIT…AYFL), 497–517 (FVNL…TLIF), 544–564 (FGYL…GSYL), 572–592 (CFAL…LLWL), and 659–679 (YIWI…GGVS). N776 is a glycosylation site (N-linked (GlcNAc...) asparagine). The next 5 helical transmembrane spans lie at 919–939 (PAVV…LSTW), 945–965 (LFSV…LVLL), 974–994 (ALFL…YCIS), 1019–1039 (AMTT…TILL), and 1043–1063 (LGII…FFFQ). 2 disordered regions span residues 1251–1271 (VRVP…GHPI) and 1295–1345 (PNMP…GYSS). Residues 1297-1306 (MPNSHHSSLS) show a composition bias toward polar residues. R1310 is modified (omega-N-methylarginine).

The protein belongs to the dispatched family.

The protein localises to the membrane. This Mus musculus (Mouse) protein is Protein dispatched homolog 2 (Disp2).